The chain runs to 309 residues: Ribosomal RNA small subunit methyltransferase H (309 aa).

S-adenosyl-L-methionine is bound by residues Gly-34–His-36, Asp-54, Phe-80, Asp-102, and Gln-109.

The protein belongs to the methyltransferase superfamily. RsmH family.

The protein localises to the cytoplasm. The enzyme catalyses cytidine(1402) in 16S rRNA + S-adenosyl-L-methionine = N(4)-methylcytidine(1402) in 16S rRNA + S-adenosyl-L-homocysteine + H(+). Its function is as follows. Specifically methylates the N4 position of cytidine in position 1402 (C1402) of 16S rRNA. In Cellvibrio japonicus (strain Ueda107) (Pseudomonas fluorescens subsp. cellulosa), this protein is Ribosomal RNA small subunit methyltransferase H.